The primary structure comprises 132 residues: Antileukoproteinase (132 aa).

The signal sequence occupies residues M1–G24. The region spanning E28–V76 is the WAP 1 domain. Disulfide bonds link C35–C64, C43–C68, C51–C63, and C57–C72. N77 is a glycosylation site (N-linked (GlcNAc...) asparagine). The WAP 2 domain maps to V82 to V130. 4 disulfide bridges follow: C89-C118, C96-C122, C105-C117, and C111-C126.

In terms of assembly, interacts with GRN; interaction protects progranulin from proteolysis. Detected in bronchoalveolar fluid (at protein level). Detected in large and small intestine, trachea, skin, lung and tongue.

The protein resides in the secreted. In terms of biological role, acid-stable proteinase inhibitor with strong affinities for trypsin, chymotrypsin, elastase, and cathepsin G. Modulates the inflammatory and immune responses after bacterial infection, and after infection by the intracellular parasite L.major. Down-regulates responses to bacterial lipopolysaccharide (LPS). Plays a role in regulating the activation of NF-kappa-B and inflammatory responses. Has antimicrobial activity against mycobacteria, but not against salmonella. Contributes to normal resistance against infection by M.tuberculosis. Required for normal resistance to infection by L.major. Required for normal wound healing, probably by preventing tissue damage by limiting protease activity. Together with ELANE, required for normal differentiation and proliferation of bone marrow myeloid cells. In Ovis aries (Sheep), this protein is Antileukoproteinase (SLPI).